The sequence spans 665 residues: Putative phospholipid:diacylglycerol acyltransferase 2 (665 aa).

Residues 48 to 68 (LIGYLCTAWWLLLFLYHSVPV) traverse the membrane as a helical segment. The Acyl-ester intermediate role is filled by serine 237. Residues aspartate 567 and histidine 620 each act as charge relay system in the active site.

The protein belongs to the AB hydrolase superfamily. Lipase family.

The protein localises to the membrane. The catalysed reaction is a glycerophospholipid + a 1,2-diacyl-sn-glycerol = a monoacylglycerophospholipid + a triacyl-sn-glycerol. This chain is Putative phospholipid:diacylglycerol acyltransferase 2 (PDAT2), found in Arabidopsis thaliana (Mouse-ear cress).